The sequence spans 278 residues: Large ribosomal subunit protein uL2 (278 aa).

Disordered regions lie at residues 28–58 and 223–278; these read TPEK…GGGH and GVVM…KNKR. Over residues 43-53 the composition is skewed to polar residues; it reads RNNQGRITTRH. Residues 268 to 278 show a composition bias toward basic residues; it reads IRRRKTGKNKR.

It belongs to the universal ribosomal protein uL2 family. In terms of assembly, part of the 50S ribosomal subunit. Forms a bridge to the 30S subunit in the 70S ribosome.

Functionally, one of the primary rRNA binding proteins. Required for association of the 30S and 50S subunits to form the 70S ribosome, for tRNA binding and peptide bond formation. It has been suggested to have peptidyltransferase activity; this is somewhat controversial. Makes several contacts with the 16S rRNA in the 70S ribosome. In Nocardioides sp. (strain ATCC BAA-499 / JS614), this protein is Large ribosomal subunit protein uL2.